The following is a 198-amino-acid chain: 3-isopropylmalate dehydratase small subunit (198 aa).

The protein belongs to the LeuD family. LeuD type 1 subfamily. As to quaternary structure, heterodimer of LeuC and LeuD.

It carries out the reaction (2R,3S)-3-isopropylmalate = (2S)-2-isopropylmalate. Its pathway is amino-acid biosynthesis; L-leucine biosynthesis; L-leucine from 3-methyl-2-oxobutanoate: step 2/4. Functionally, catalyzes the isomerization between 2-isopropylmalate and 3-isopropylmalate, via the formation of 2-isopropylmaleate. The polypeptide is 3-isopropylmalate dehydratase small subunit (Mycolicibacterium paratuberculosis (strain ATCC BAA-968 / K-10) (Mycobacterium paratuberculosis)).